We begin with the raw amino-acid sequence, 468 residues long: Acetyl-CoA decarbonylase/synthase complex subunit gamma 2 (468 aa).

The region spanning 1–60 is the 4Fe-4S domain; sequence MKINSPLEAYKYLPQTNCGECGEATCMAFASKLIDRSGKPTQCPPLVKEKKFAKKLAELE. [4Fe-4S] cluster contacts are provided by C18, C21, C26, and C43.

In terms of assembly, heterodimer of delta and gamma chains. The ACDS complex is made up of alpha, epsilon, beta, gamma and delta chains with a probable stoichiometry of (alpha(2)epsilon(2))(4)-beta(8)-(gamma(1)delta(1))(8). The cofactor is corrinoid. Requires [4Fe-4S] cluster as cofactor.

It carries out the reaction 5,6,7,8-tetrahydrosarcinapterin + methyl-Co(III)-[corrinoid Fe-S protein] = 5-methyltetrahydrosarcinapterin + Co(I)-[corrinoid Fe-S protein] + H(+). The protein operates within one-carbon metabolism; methanogenesis from acetate. Part of a complex that catalyzes the reversible cleavage of acetyl-CoA, allowing growth on acetate as sole source of carbon and energy. In Methanosarcina thermophila, this protein is Acetyl-CoA decarbonylase/synthase complex subunit gamma 2.